Consider the following 275-residue polypeptide: MRWPPWASNTQASNNDHPTTTNNNDPKNLLDWSAFTELRTLIPTLVLTTGILSAFTLHRNYLRRFPTAVNITPAYYRRRSILGKVTSVGDGDNFRIYHTPGGRLAGWGWVPWKKVPTTRKELRDQTIHVRIAGVDAPEQAHFGRPAQPFGKEAHEWLTGYLINRRVRIYVHRQDQYQRVVATVFVRRALDFPVPFRRRDVGYEMLRKGLATVYEAKVGAEFGGEVMEKKYRSAEWWAKARGLGLWKGFKKNRDAWESPREFKTRTGMEDVGDGKK.

A disordered region spans residues 1–25 (MRWPPWASNTQASNNDHPTTTNNND). Residues 14–25 (NNDHPTTTNNND) show a composition bias toward low complexity. A helical transmembrane segment spans residues 41-57 (LIPTLVLTTGILSAFTL). A TNase-like domain is found at 79–247 (RSILGKVTSV…KARGLGLWKG (169 aa)). Arg-130 is a catalytic residue. Ca(2+) is bound at residue Asp-135. Catalysis depends on residues Glu-138 and Arg-178.

This sequence belongs to the LCL3 family.

The protein resides in the mitochondrion. Its subcellular location is the membrane. The sequence is that of Probable endonuclease lcl3 (lcl3) from Aspergillus niger (strain ATCC MYA-4892 / CBS 513.88 / FGSC A1513).